Consider the following 435-residue polypeptide: Legumain (435 aa).

Residues 1-17 form the signal peptide; it reads MTWRVAVLLSLVLGAGA. Residue N93 is glycosylated (N-linked (GlcNAc...) asparagine). H150 is a catalytic residue. A glycan (N-linked (GlcNAc...) asparagine) is linked at N169. The active-site Nucleophile is C191. N215, N265, and N274 each carry an N-linked (GlcNAc...) asparagine glycan. The propeptide occupies 326–435; it reads NMKESQVLVG…AMDKVCLSHY (110 aa). 2 disulfide bridges follow: C380/C414 and C392/C431.

This sequence belongs to the peptidase C13 family. As to quaternary structure, homodimer before autocatalytic removal of the propeptide. Monomer after autocatalytic processing. May interact with integrins. In terms of processing, activated by autocatalytic processing at pH 4. As to expression, detected in kidney cortex (at protein level).

It is found in the lysosome. The enzyme catalyses Hydrolysis of proteins and small molecule substrates at -Asn-|-Xaa- bonds.. Functionally, has a strict specificity for hydrolysis of asparaginyl bonds. Can also cleave aspartyl bonds slowly, especially under acidic conditions. Involved in the processing of proteins for MHC class II antigen presentation in the lysosomal/endosomal system. Also involved in MHC class I antigen presentation in cross-presenting dendritic cells by mediating cleavage and maturation of Perforin-2 (MPEG1), thereby promoting antigen translocation in the cytosol. Required for normal lysosomal protein degradation in renal proximal tubules. Required for normal degradation of internalized EGFR. Plays a role in the regulation of cell proliferation via its role in EGFR degradation. The chain is Legumain (Lgmn) from Rattus norvegicus (Rat).